Consider the following 394-residue polypeptide: MSRELHDVDLAEVKPLVEKGESITGLLQEFDVQEQDIETLHGSLHVTLCGTPKGNRPVILTYHDIGMNHKTCYNPLFNSEDMQEITQHFAVCHVDAPGQQDGAPSFPVGYMYPSMDQLAEMLPGVLHKFGLKSVIGMGTGAGAYILTRFALNNPEMVEGLVLMNVNPCAEGWMDWAASKISGWTQALPDMVVSHLFGKEEIHSNVEVVHTYRQHILNDMNPSNLHLFISAYNSRRDLEIERPMPGTHTVTLQCPALLVVGDNSPAVDAVVECNSKLDPTKTTLLKMADCGGLPQISQPAKLAEAFKYFVQGMGYMPSASMTRLMRSRTASGSSVTSLEGTRSRSHTSEGPRSRSHTSEGSRSRSHTSEDARLNITPSSGATGNNAGPKSMEVSC.

Position 2 is an N-acetylserine (serine 2). Phosphoserine occurs at positions 2, 319, and 326. The tract at residues 325-394 (RSRTASGSSV…AGPKSMEVSC (70 aa)) is disordered. Residues 327-339 (RTASGSSVTSLEG) show a composition bias toward polar residues. The residue at position 328 (threonine 328) is a Phosphothreonine. At serine 330 the chain carries Phosphoserine. Serine 332 carries the phosphoserine; by SGK1 modification. Serine 333 bears the Phosphoserine mark. Threonine 335 is subject to Phosphothreonine. Serine 336 carries the post-translational modification Phosphoserine. 3 tandem repeats follow at residues 339–348 (GTRSRSHTSE), 349–358 (GPRSRSHTSE), and 359–368 (GSRSRSHTSE). The segment at 339 to 368 (GTRSRSHTSEGPRSRSHTSEGSRSRSHTSE) is 3 X 10 AA tandem repeats of G-[PST]-R-S-R-S-H-T-S-E. Threonine 340 carries the phosphothreonine modification. The residue at position 342 (serine 342) is a Phosphoserine. Over residues 345 to 371 (HTSEGPRSRSHTSEGSRSRSHTSEDAR) the composition is skewed to basic and acidic residues. Threonine 346 is modified (phosphothreonine). Serine 352 is subject to Phosphoserine. Phosphothreonine; by SGK1 is present on threonine 356. A phosphoserine mark is found at serine 362 and serine 364. Phosphothreonine is present on residues threonine 366 and threonine 375. A compositionally biased stretch (polar residues) spans 374–386 (ITPSSGATGNNAG).

Belongs to the NDRG family. Interacts with RAB4A (membrane-bound form); the interaction involves NDRG1 in vesicular recycling of CDH1. Interacts with APOA1, APOA2, PRA1 and RTN1. Post-translationally, under stress conditions, phosphorylated in the C-terminal on many serine and threonine residues. Phosphorylated in vitro by PKA. Phosphorylation enhanced by increased intracellular cAMP levels. Homocysteine induces dephosphorylation. Phosphorylation by SGK1 is cell cycle dependent.

It localises to the cytoplasm. The protein resides in the cytosol. It is found in the cytoskeleton. The protein localises to the microtubule organizing center. Its subcellular location is the centrosome. It localises to the nucleus. The protein resides in the cell membrane. Its function is as follows. Stress-responsive protein involved in hormone responses, cell growth, and differentiation. Acts as a tumor suppressor in many cell types. Necessary but not sufficient for p53/TP53-mediated caspase activation and apoptosis. Has a role in cell trafficking notably of the Schwann cell and is necessary for the maintenance and development of the peripheral nerve myelin sheath. Required for vesicular recycling of CDH1 and TF. May also function in lipid trafficking. Protects cells from spindle disruption damage. Functions in p53/TP53-dependent mitotic spindle checkpoint. Regulates microtubule dynamics and maintains euploidy. The protein is Protein NDRG1 (Ndrg1) of Rattus norvegicus (Rat).